A 274-amino-acid chain; its full sequence is Nitrogenase iron protein (274 aa).

Residue 8-15 (GKGGIGKS) participates in ATP binding. Cys-94 is a [4Fe-4S] cluster binding site. Position 97 is an ADP-ribosylarginine; by dinitrogenase reductase ADP-ribosyltransferase (Arg-97). Residue Cys-131 participates in [4Fe-4S] cluster binding.

The protein belongs to the NifH/BchL/ChlL family. Homodimer. It depends on [4Fe-4S] cluster as a cofactor. In terms of processing, the reversible ADP-ribosylation of Arg-97 inactivates the nitrogenase reductase and regulates nitrogenase activity.

It carries out the reaction N2 + 8 reduced [2Fe-2S]-[ferredoxin] + 16 ATP + 16 H2O = H2 + 8 oxidized [2Fe-2S]-[ferredoxin] + 2 NH4(+) + 16 ADP + 16 phosphate + 6 H(+). Its function is as follows. The key enzymatic reactions in nitrogen fixation are catalyzed by the nitrogenase complex, which has 2 components: the iron protein and the molybdenum-iron protein. The chain is Nitrogenase iron protein from Chlorobium limicola (strain DSM 245 / NBRC 103803 / 6330).